The following is a 37-amino-acid chain: Protein YnaM (37 aa).

The chain crosses the membrane as a helical span at residues 4–24 (ILIITSLLIIFSIFSHALIKL).

It is found in the cell inner membrane. The polypeptide is Protein YnaM (Escherichia coli (strain K12)).